Consider the following 131-residue polypeptide: Methylglyoxal synthase (131 aa).

Residues 1-131 form the MGS-like domain; that stretch reads MKIALIAHDK…GDLDYRKLRK (131 aa). Residues histidine 8, lysine 12, 34–37, and 54–55 contribute to the substrate site; these read TGTT and SG. The active-site Proton donor/acceptor is the aspartate 60. Histidine 87 is a binding site for substrate.

It belongs to the methylglyoxal synthase family.

It carries out the reaction dihydroxyacetone phosphate = methylglyoxal + phosphate. In terms of biological role, catalyzes the formation of methylglyoxal from dihydroxyacetone phosphate. In Bacillus anthracis (strain A0248), this protein is Methylglyoxal synthase.